An 86-amino-acid chain; its full sequence is Large ribosomal subunit protein bL27c (86 aa).

Residues 1–27 (MAHKKGSGSTRNGRDSNSKRLGVKKYG) form a disordered region.

This sequence belongs to the bacterial ribosomal protein bL27 family.

It localises to the plastid. The protein localises to the chloroplast. The polypeptide is Large ribosomal subunit protein bL27c (rpl27) (Porphyra purpurea (Red seaweed)).